Consider the following 107-residue polypeptide: Iron-sulfur cluster assembly protein CyaY (107 aa).

This sequence belongs to the frataxin family.

Involved in iron-sulfur (Fe-S) cluster assembly. May act as a regulator of Fe-S biogenesis. This is Iron-sulfur cluster assembly protein CyaY from Edwardsiella ictaluri (strain 93-146).